The chain runs to 1181 residues: Putative type II restriction enzyme and methyltransferase RM.MjaORFECS2P (1181 aa).

This sequence in the C-terminal section; belongs to the N(4)/N(6)-methyltransferase family.

The catalysed reaction is Endonucleolytic cleavage of DNA to give specific double-stranded fragments with terminal 5'-phosphates.. It catalyses the reaction a 2'-deoxyadenosine in DNA + S-adenosyl-L-methionine = an N(6)-methyl-2'-deoxyadenosine in DNA + S-adenosyl-L-homocysteine + H(+). Probably a G subtype restriction enzyme that recognizes an undetermined sequence and cleaves at an undetermined site. Probably also acts as an alpha subtype methylase, presumably on the same sequence. The chain is Putative type II restriction enzyme and methyltransferase RM.MjaORFECS2P from Methanocaldococcus jannaschii (strain ATCC 43067 / DSM 2661 / JAL-1 / JCM 10045 / NBRC 100440) (Methanococcus jannaschii).